Reading from the N-terminus, the 84-residue chain is Cell division topological specificity factor (84 aa).

It belongs to the MinE family.

Functionally, prevents the cell division inhibition by proteins MinC and MinD at internal division sites while permitting inhibition at polar sites. This ensures cell division at the proper site by restricting the formation of a division septum at the midpoint of the long axis of the cell. The chain is Cell division topological specificity factor from Desulfotalea psychrophila (strain LSv54 / DSM 12343).